Reading from the N-terminus, the 191-residue chain is Adenylate kinase (191 aa).

An ATP-binding site is contributed by 10–15 (GAGKGT). The tract at residues 30-59 (STGDIFRANVTEGTPLGVEAKRYMDAGEYV) is NMP. AMP is bound by residues Thr-31, Arg-36, 57 to 59 (EYV), 85 to 88 (GYPR), and Gln-92. The LID stretch occupies residues 126–136 (QRAQVEGRADD). Residue Arg-127 coordinates ATP. Positions 133 and 144 each coordinate AMP. Position 172 (Gly-172) interacts with ATP.

The protein belongs to the adenylate kinase family. In terms of assembly, monomer.

It is found in the cytoplasm. It carries out the reaction AMP + ATP = 2 ADP. The protein operates within purine metabolism; AMP biosynthesis via salvage pathway; AMP from ADP: step 1/1. In terms of biological role, catalyzes the reversible transfer of the terminal phosphate group between ATP and AMP. Plays an important role in cellular energy homeostasis and in adenine nucleotide metabolism. The chain is Adenylate kinase from Nocardioides sp. (strain ATCC BAA-499 / JS614).